We begin with the raw amino-acid sequence, 733 residues long: Catalase-peroxidase 2 (733 aa).

A disordered region spans residues 1 to 35 (MAEAETHPPIGESQTEPAESGCPMRIKPPVEGGSN). Residues 106–234 (WHAAGTYRVE…PXXPHMGLIY (129 aa)) constitute a cross-link (tryptophyl-tyrosyl-methioninium (Trp-Tyr) (with M-260)). Residue H107 is the Proton acceptor of the active site. Positions 234–260 (YVNPEGPEGNPDYLAAAIDIRETFGRM) form a cross-link, tryptophyl-tyrosyl-methioninium (Tyr-Met) (with W-106). Position 275 (H275) interacts with heme.

The protein belongs to the peroxidase family. Peroxidase/catalase subfamily. Homodimer or homotetramer. Heme b is required as a cofactor. Post-translationally, formation of the three residue Trp-Tyr-Met cross-link is important for the catalase, but not the peroxidase activity of the enzyme.

It carries out the reaction H2O2 + AH2 = A + 2 H2O. The catalysed reaction is 2 H2O2 = O2 + 2 H2O. Bifunctional enzyme with both catalase and broad-spectrum peroxidase activity. May play a role in the intracellular survival of mycobacteria. This chain is Catalase-peroxidase 2, found in Mycolicibacterium fortuitum (Mycobacterium fortuitum).